Here is a 73-residue protein sequence, read N- to C-terminus: Putative sodium channel toxin Ts39 (73 aa).

An N-terminal signal peptide occupies residues 1-22 (MKTLNFCLFLVIISSLTVRVFC). The LCN-type CS-alpha/beta domain occupies 24 to 73 (NDRFLTVNDNYVICLYINKSFVNCENLCKAYMNAKDGFCRQPHCFCTDVE). Intrachain disulfides connect Cys-37–Cys-62, Cys-47–Cys-67, and Cys-51–Cys-69.

The protein belongs to the long (3 C-C) scorpion toxin superfamily. Sodium channel inhibitor family. As to expression, expressed by the venom gland.

Its subcellular location is the secreted. Functionally, putative sodium channel toxin. This is Putative sodium channel toxin Ts39 from Tityus serrulatus (Brazilian scorpion).